We begin with the raw amino-acid sequence, 306 residues long: Glutaminase (306 aa).

S64, N115, E159, N166, Y190, Y242, and V260 together coordinate substrate.

It belongs to the glutaminase family. As to quaternary structure, homotetramer.

The catalysed reaction is L-glutamine + H2O = L-glutamate + NH4(+). The polypeptide is Glutaminase (Aeromonas salmonicida (strain A449)).